The following is a 105-amino-acid chain: Large ribosomal subunit protein uL24 (105 aa).

Belongs to the universal ribosomal protein uL24 family. As to quaternary structure, part of the 50S ribosomal subunit.

In terms of biological role, one of two assembly initiator proteins, it binds directly to the 5'-end of the 23S rRNA, where it nucleates assembly of the 50S subunit. One of the proteins that surrounds the polypeptide exit tunnel on the outside of the subunit. The sequence is that of Large ribosomal subunit protein uL24 from Wolbachia pipientis wMel.